Here is a 274-residue protein sequence, read N- to C-terminus: tRNA-cytidine(32) 2-sulfurtransferase (274 aa).

The short motif at 40–45 (SGGKDS) is the PP-loop motif element. Positions 115, 118, and 206 each coordinate [4Fe-4S] cluster.

It belongs to the TtcA family. Homodimer. Mg(2+) is required as a cofactor. It depends on [4Fe-4S] cluster as a cofactor.

The protein localises to the cytoplasm. It carries out the reaction cytidine(32) in tRNA + S-sulfanyl-L-cysteinyl-[cysteine desulfurase] + AH2 + ATP = 2-thiocytidine(32) in tRNA + L-cysteinyl-[cysteine desulfurase] + A + AMP + diphosphate + H(+). It functions in the pathway tRNA modification. Functionally, catalyzes the ATP-dependent 2-thiolation of cytidine in position 32 of tRNA, to form 2-thiocytidine (s(2)C32). The sulfur atoms are provided by the cysteine/cysteine desulfurase (IscS) system. In Pseudomonas fluorescens (strain Pf0-1), this protein is tRNA-cytidine(32) 2-sulfurtransferase.